The sequence spans 1107 residues: Copine family protein 1 (1107 aa).

Residues M1–H22 lie on the Extracellular side of the membrane. A helical membrane pass occupies residues F23–F45. Topologically, residues F46–L1107 are cytoplasmic. A coiled-coil region spans residues V67 to N124. Positions Q478–Q488 are enriched in low complexity. Disordered regions lie at residues Q478–S501 and H673–V698. Positions I492–S501 are enriched in basic and acidic residues. Residues K687–V698 show a composition bias toward polar residues. Residues N863–D1023 form the VWFA domain.

Belongs to the copine family. As to quaternary structure, may interact (via VWFA domain) with unc-89 (via Ig-like C2-type 1-3) and unc-96 (via C-terminus); cpna-1 binding sites for unc-89 and unc-96 are different. May interact with pat-6. May interact with lim-9 (via LIM domains) and with scpl-1 (via FCP1 homology domain). In terms of tissue distribution, expressed in body wall muscles (at protein level).

The protein localises to the basal cell membrane. The protein resides in the cytoplasm. It is found in the myofibril. It localises to the sarcomere. Its subcellular location is the m line. Its function is as follows. Involved in the assembly of dense bodies and M lines during body wall muscle development. Acts by recruiting downstream of integrin-associated protein pat-6/actopaxin several dense bodies and M line components including unc-89, lim-9, scpl-1 and unc-96 to integrin-mediated attachment sites. This is Copine family protein 1 from Caenorhabditis elegans.